The sequence spans 1072 residues: Netrin receptor unc-5 (1072 aa).

Residues methionine 1 to glycine 30 form the signal peptide. The Extracellular segment spans residues glutamate 31–leucine 440. Positions leucine 77–serine 100 are disordered. N-linked (GlcNAc...) asparagine glycosylation occurs at asparagine 79. Positions proline 128–threonine 224 constitute an Ig-like domain. 5 cysteine pairs are disulfide-bonded: cysteine 149–cysteine 207, cysteine 253–cysteine 303, cysteine 336–cysteine 375, cysteine 338–cysteine 378, and cysteine 352–cysteine 364. An Ig-like C2-type domain is found at lysine 232–serine 314. Asparagine 300 carries an N-linked (GlcNAc...) asparagine glycan. TSP type-1 domains are found at residues asparagine 324–proline 379 and methionine 398–glutamine 499. A helical membrane pass occupies residues leucine 441–valine 461. The Cytoplasmic portion of the chain corresponds to glycine 462–isoleucine 1072. Positions serine 654–proline 802 constitute a ZU5 domain. Residues leucine 980–isoleucine 1067 enclose the Death domain.

Belongs to the unc-5 family. Post-translationally, phosphorylated on different cytoplasmic tyrosine residues. Prior to gastrulation, it is strongly expressed in the presumptive mesoderm. Mesodermal expression begins to fade during stages 13-14, persisting only in the cells that form the dorsal vessel. Expressed within the CNS from late stage 13, shortly after the first axons have extended. Detected in several dispersed clusters of cells within the CNS, increasing in number as development proceeds. Also expressed in the peripheral and exit glia, which migrate laterally out of the CNS between stages 14 and 17. Strongly expressed in motor axons that exit the CNS ipsilaterally via the segmental nerve root (SN). Not expressed on either commissural or longitudinal axons within the CNS, nor on motor axons that exit via the intersegmental nerve (ISN). In the periphery, it is detected on all branches of the SN. Also expressed at high level in exit and peripheral glia along both the SN and ISN.

The protein resides in the membrane. Receptor for netrin required for motor axon guidance. Mediates both short- and long-range axon motor repulsion in the developing nervous system upon ligand binding. Also involved in glial migration. While short-range repulsion requires both fra and unc-5, long-range repulsion only requires unc-5. This is Netrin receptor unc-5 (unc-5) from Drosophila melanogaster (Fruit fly).